Consider the following 231-residue polypeptide: 2-C-methyl-D-erythritol 4-phosphate cytidylyltransferase (231 aa).

The protein belongs to the IspD/TarI cytidylyltransferase family. IspD subfamily.

The catalysed reaction is 2-C-methyl-D-erythritol 4-phosphate + CTP + H(+) = 4-CDP-2-C-methyl-D-erythritol + diphosphate. The protein operates within isoprenoid biosynthesis; isopentenyl diphosphate biosynthesis via DXP pathway; isopentenyl diphosphate from 1-deoxy-D-xylulose 5-phosphate: step 2/6. Catalyzes the formation of 4-diphosphocytidyl-2-C-methyl-D-erythritol from CTP and 2-C-methyl-D-erythritol 4-phosphate (MEP). The chain is 2-C-methyl-D-erythritol 4-phosphate cytidylyltransferase from Clostridium kluyveri (strain NBRC 12016).